Reading from the N-terminus, the 509-residue chain is Cobyric acid synthase (509 aa).

The GATase cobBQ-type domain maps to 262-459; it reads EIKVGIIKLP…IHGIFENDSW (198 aa). Cys343 functions as the Nucleophile in the catalytic mechanism. His451 is a catalytic residue.

It belongs to the CobB/CobQ family. CobQ subfamily.

It participates in cofactor biosynthesis; adenosylcobalamin biosynthesis. Functionally, catalyzes amidations at positions B, D, E, and G on adenosylcobyrinic A,C-diamide. NH(2) groups are provided by glutamine, and one molecule of ATP is hydrogenolyzed for each amidation. This Prochlorococcus marinus (strain MIT 9215) protein is Cobyric acid synthase.